A 187-amino-acid chain; its full sequence is Elongation factor P (187 aa).

Belongs to the elongation factor P family.

It localises to the cytoplasm. It participates in protein biosynthesis; polypeptide chain elongation. Involved in peptide bond synthesis. Stimulates efficient translation and peptide-bond synthesis on native or reconstituted 70S ribosomes in vitro. Probably functions indirectly by altering the affinity of the ribosome for aminoacyl-tRNA, thus increasing their reactivity as acceptors for peptidyl transferase. This chain is Elongation factor P (efp), found in Mycobacterium bovis (strain ATCC BAA-935 / AF2122/97).